A 192-amino-acid chain; its full sequence is Immunoglobulin superfamily member 23 (192 aa).

Positions 1 to 26 (MRAKPQSPLPRNPVPAWSPPTTTTDP) are disordered. Residues 7–18 (SPLPRNPVPAWS) are compositionally biased toward pro residues. The 109-residue stretch at 20–128 (PTTTTDPMLE…QLVSEPVTIS (109 aa)) folds into the Ig-like domain. A glycan (N-linked (GlcNAc...) asparagine) is linked at Asn-64. A helical membrane pass occupies residues 158–178 (LLAAGILGAGALIAGMCFIII).

As to expression, expressed in bone and small intestine. Highly expressed in osteoclasts, and low expressed in osteoblasts and peripheral blood mononuclear cells (PBMCs).

It is found in the cell membrane. Functionally, may be involved in osteoclast differentiation. The protein is Immunoglobulin superfamily member 23 of Homo sapiens (Human).